The following is a 520-amino-acid chain: Transactivator/viroplasmin protein (520 aa).

The disordered stretch occupies residues 486 to 520; it reads VQDASADSGPKDGPPPTRSIVEKEDVPTTSSKQVD.

This sequence belongs to the caulimoviridae viroplasmin family.

It localises to the host cytoplasm. In terms of biological role, enhances the ribosomal termination-reinitiation event leading to the translation of major open reading frames on the polycistronic viral RNAs. The sequence is that of Transactivator/viroplasmin protein from Cauliflower mosaic virus (strain NY8153) (CaMV).